The sequence spans 118 residues: Large ribosomal subunit protein uL18 (118 aa).

It belongs to the universal ribosomal protein uL18 family. As to quaternary structure, part of the 50S ribosomal subunit; part of the 5S rRNA/L5/L18/L25 subcomplex. Contacts the 5S and 23S rRNAs.

Its function is as follows. This is one of the proteins that bind and probably mediate the attachment of the 5S RNA into the large ribosomal subunit, where it forms part of the central protuberance. The protein is Large ribosomal subunit protein uL18 of Helicobacter pylori (strain J99 / ATCC 700824) (Campylobacter pylori J99).